The following is a 167-amino-acid chain: Protein FimG (167 aa).

The first 23 residues, Met1–Ala23, serve as a signal peptide directing secretion. Cys39 and Cys77 are oxidised to a cystine.

This sequence belongs to the fimbrial protein family.

Its subcellular location is the fimbrium. Functionally, involved in regulation of length and mediation of adhesion of type 1 fimbriae (but not necessary for the production of fimbriae). Involved in the integration of FimH in the fimbriae. The protein is Protein FimG (fimG) of Escherichia coli (strain K12).